The following is a 276-amino-acid chain: Formamidopyrimidine-DNA glycosylase (276 aa).

The Schiff-base intermediate with DNA role is filled by Pro-2. Residue Glu-3 is the Proton donor of the active site. Lys-58 acts as the Proton donor; for beta-elimination activity in catalysis. His-92, Arg-111, and Lys-154 together coordinate DNA. The segment at 239–273 (QVYGHVGEPCPVCGTKFEKIKVNGRGTTFCPHCQV) adopts an FPG-type zinc-finger fold. Arg-263 functions as the Proton donor; for delta-elimination activity in the catalytic mechanism.

It belongs to the FPG family. In terms of assembly, monomer. It depends on Zn(2+) as a cofactor.

The enzyme catalyses Hydrolysis of DNA containing ring-opened 7-methylguanine residues, releasing 2,6-diamino-4-hydroxy-5-(N-methyl)formamidopyrimidine.. It carries out the reaction 2'-deoxyribonucleotide-(2'-deoxyribose 5'-phosphate)-2'-deoxyribonucleotide-DNA = a 3'-end 2'-deoxyribonucleotide-(2,3-dehydro-2,3-deoxyribose 5'-phosphate)-DNA + a 5'-end 5'-phospho-2'-deoxyribonucleoside-DNA + H(+). Its function is as follows. Involved in base excision repair of DNA damaged by oxidation or by mutagenic agents. Acts as a DNA glycosylase that recognizes and removes damaged bases. Has a preference for oxidized purines, such as 7,8-dihydro-8-oxoguanine (8-oxoG). Has AP (apurinic/apyrimidinic) lyase activity and introduces nicks in the DNA strand. Cleaves the DNA backbone by beta-delta elimination to generate a single-strand break at the site of the removed base with both 3'- and 5'-phosphates. This Lactobacillus helveticus (strain DPC 4571) protein is Formamidopyrimidine-DNA glycosylase.